The chain runs to 379 residues: Probable homogentisate phytyltransferase 2, chloroplastic (379 aa).

Positions Met-1 to Leu-39 are disordered. The transit peptide at Met-1–Cys-65 directs the protein to the chloroplast. 8 helical membrane passes run Trp-121–Val-141, Leu-174–Ile-194, Thr-195–Leu-215, Val-220–Tyr-240, Trp-252–Ile-272, Ile-299–Phe-319, Thr-328–Leu-348, and Tyr-361–Leu-378.

This sequence belongs to the UbiA prenyltransferase family.

It localises to the plastid. The protein localises to the chloroplast thylakoid membrane. The catalysed reaction is phytyl diphosphate + homogentisate + H(+) = 2-methyl-6-phytyl-1,4-benzene-1,4-diol + CO2 + diphosphate. The protein operates within cofactor biosynthesis; tocopherol biosynthesis. Its function is as follows. Involved in the synthesis of tocopherol (vitamin E). Catalyzes the condensation of homogentisate and phytyl diphosphate to form dimethylphytylhydrquinone. This is Probable homogentisate phytyltransferase 2, chloroplastic (HPT2) from Oryza sativa subsp. japonica (Rice).